A 475-amino-acid chain; its full sequence is Splicing factor U2AF 65 kDa subunit (475 aa).

The tract at residues 1–90 (MSDFDEFERQ…RHEKKKKVRK (90 aa)) is disordered. Ser-2 is modified (N-acetylserine). Ser-2 is subject to Phosphoserine. The tract at residues 2 to 93 (SDFDEFERQL…KKKKVRKYWD (92 aa)) is required for interaction with PRPF19. The span at 7–22 (FERQLNENKQERDKEN) shows a compositional bias: basic and acidic residues. Lys-15 carries the 5-hydroxylysine; by JMJD6; alternate modification. A Glycyl lysine isopeptide (Lys-Gly) (interchain with G-Cter in SUMO2); alternate cross-link involves residue Lys-15. Positions 17-47 (ERDKENRHRKRSHSRSRSRDRKRRSRSRDRR) are necessary and sufficient to stimulate pre-mRNAs 3'-end cleavage in a CFIm complex-dependent manner. Residues 23–46 (RHRKRSHSRSRSRDRKRRSRSRDR) show a composition bias toward basic residues. Residues 47–56 (RNRDQRSASR) show a composition bias toward basic and acidic residues. Lys-70 is covalently cross-linked (Glycyl lysine isopeptide (Lys-Gly) (interchain with G-Cter in SUMO2); alternate). Lys-70 carries the N6-acetyllysine; alternate modification. Phosphoserine is present on Ser-79. Over residues 79 to 89 (SPRHEKKKKVR) the composition is skewed to basic residues. RRM domains lie at 149–231 (RRLY…RPHD), 259–337 (HKLF…RASV), and 385–466 (LPEE…YCDP). Lys-276 carries the post-translational modification 5-hydroxylysine; by JMJD6. Phosphoserine is present on Ser-294.

This sequence belongs to the splicing factor SR family. In terms of assembly, interacts with U2AF1L4. Heterodimer with U2AF1. Binds unphosphorylated SF1. Interacts with SCAF11 and SNW1. Interacts with ZRSR2/U2AF1-RS2. Interacts with RBM17. Interacts with PRPF19; the interaction is direct. Interacts with POLR2A (via the C-terminal domain); Interacts with PRPF19; the interaction is direct. Interacts with POLR2A (via the C-terminal domain); recruits PRPF19 and the Prp19 complex to the pre-mRNA. Interacts with KHDC4 (Isoform 2). Interacts with ZRSR2. Interacts with the SF3B complex composed of SF3B1, SF3B2, SF3B3, SF3B4, SF3B5, SF3B6 and PHF5A. Interacts (via N-terminus) with CPSF7 (via C-terminus); this interaction stimulates pre-mRNA 3'-end processing by promoting the recruitment of the CFIm complex to cleavage and polyadenylation signals. Interacts with ARGLU1; interaction may be involved in ARGLU1-mediated modulation of alternative splicing. Lysyl-hydroxylation at Lys-15 and Lys-276 affects the mRNA splicing activity of the protein, leading to regulate some, but not all, alternative splicing events.

The protein resides in the nucleus. Its function is as follows. Plays a role in pre-mRNA splicing and 3'-end processing. By recruiting PRPF19 and the PRP19C/Prp19 complex/NTC/Nineteen complex to the RNA polymerase II C-terminal domain (CTD), and thereby pre-mRNA, may couple transcription to splicing. Required for the export of mRNA out of the nucleus, even if the mRNA is encoded by an intron-less gene. Positively regulates pre-mRNA 3'-end processing by recruiting the CFIm complex to cleavage and polyadenylation signals. This chain is Splicing factor U2AF 65 kDa subunit (U2af2), found in Mus musculus (Mouse).